Reading from the N-terminus, the 122-residue chain is Piercer of microtubule wall 2 protein (122 aa).

Basic and acidic residues predominate over residues 1-23 (MARETDCDLDKKTSLTSDAEMRP). 2 disordered regions span residues 1–26 (MARE…PEPP) and 99–122 (QNNS…QHTL). Residues 113-122 (IDSPNYQHTL) are compositionally biased toward polar residues.

The protein belongs to the PIERCE2 family. As to quaternary structure, microtubule inner protein component of sperm flagellar doublet microtubules. Interacts with CFAP53, ODAD1 and ODAD3; the interactions link the outer dynein arms docking complex (ODA-DC) to the internal microtubule inner proteins (MIP) in cilium axoneme.

The protein resides in the cytoplasm. It is found in the cytoskeleton. It localises to the cilium axoneme. The protein localises to the flagellum axoneme. In terms of biological role, microtubule inner protein involved in the attachment of outer dynein arms (ODAs) to dynein-decorated doublet microtubules (DMTs) in cilia axoneme, which is required for motile cilia beating. The sequence is that of Piercer of microtubule wall 2 protein from Mus musculus (Mouse).